The sequence spans 643 residues: Extracellular metalloproteinase 4 (643 aa).

Positions 1–18 are cleaved as a signal peptide; it reads MHGLLLAGLLALPLNVLA. Positions 19–254 are excised as a propeptide; sequence HPTESHSSGI…VHSVVDYVSA (236 aa). The span at 47-57 shows a compositional bias: basic and acidic residues; the sequence is TKSDAVPKQDD. The tract at residues 47-71 is disordered; the sequence is TKSDAVPKQDDESFTTSSTGDDNVS. The segment covering 60-71 has biased composition (polar residues); it reads FTTSSTGDDNVS. 2 N-linked (GlcNAc...) asparagine glycosylation sites follow: Asn-271 and Asn-420. Position 437 (His-437) interacts with Zn(2+). Residue Glu-438 is part of the active site. His-441 lines the Zn(2+) pocket. Asn-510 and Asn-553 each carry an N-linked (GlcNAc...) asparagine glycan.

This sequence belongs to the peptidase M36 family. The cofactor is Zn(2+).

The protein resides in the secreted. In terms of biological role, secreted metalloproteinase probably acting as a virulence factor. This Arthroderma benhamiae (Trichophyton mentagrophytes) protein is Extracellular metalloproteinase 4 (MEP4).